The primary structure comprises 342 residues: Thymidylate synthase (342 aa).

DUMP-binding positions include Arg-31 and 156–157 (RR). Catalysis depends on Cys-176, which acts as the Nucleophile. DUMP is bound by residues 196–199 (RSGD), Asn-207, and 237–239 (HVY). Residue Asp-199 coordinates (6R)-5,10-methylene-5,6,7,8-tetrahydrofolate. Ala-341 provides a ligand contact to (6R)-5,10-methylene-5,6,7,8-tetrahydrofolate.

It belongs to the thymidylate synthase family. Bacterial-type ThyA subfamily. As to quaternary structure, homodimer.

The protein localises to the cytoplasm. The enzyme catalyses dUMP + (6R)-5,10-methylene-5,6,7,8-tetrahydrofolate = 7,8-dihydrofolate + dTMP. Its pathway is pyrimidine metabolism; dTTP biosynthesis. Its function is as follows. Catalyzes the reductive methylation of 2'-deoxyuridine-5'-monophosphate (dUMP) to 2'-deoxythymidine-5'-monophosphate (dTMP) while utilizing 5,10-methylenetetrahydrofolate (mTHF) as the methyl donor and reductant in the reaction, yielding dihydrofolate (DHF) as a by-product. This enzymatic reaction provides an intracellular de novo source of dTMP, an essential precursor for DNA biosynthesis. This is Thymidylate synthase from Haloferax volcanii (Halobacterium volcanii).